The chain runs to 943 residues: Synaptotagmin-like protein 2 (943 aa).

The RabBD domain occupies 1–57; it reads MIDLSFLTEEEQEAIMKVLQRDAALKRAEEERVRHLPEKVKDDQQLKNMSGQWFYEA. 3 disordered regions span residues 77 to 99, 118 to 291, and 361 to 613; these read RKKR…KESW, EEPE…VRFH, and ESDR…SNSG. Over residues 82-99 the composition is skewed to basic and acidic residues; that stretch reads QVADEQSKDRANRAKESW. A compositionally biased stretch (low complexity) spans 125–138; the sequence is APASPSSSVVNPVS. Positions 174 to 192 are enriched in polar residues; sequence SQQTKNEQSKNGKTGLFQT. A compositionally biased stretch (basic and acidic residues) spans 194–205; it reads KEGELSESKEES. Polar residues-rich tracts occupy residues 382–394, 404–416, and 426–440; these read PQPS…LPFQ, KNET…SGSF, and EFLT…NSHT. A compositionally biased stretch (basic and acidic residues) spans 524-537; the sequence is ELVRSAEDDQKADQ. Polar residues predominate over residues 549–560; that stretch reads STVSSQPDNQFS. The segment covering 603-613 has biased composition (low complexity); that stretch reads SSLTNLSSNSG. C2 domains lie at 637–762 and 777–906; these read VKGS…LKWY and NRGE…VDWM.

In terms of assembly, monomer. Binds NRXN1. Binds RAB27A that has been activated by GTP-binding via its N-terminus. Interacts with RAB27B.

It localises to the cell membrane. Functionally, may act as a RAB27A effector protein and play a role in cytotoxic granule exocytosis in lymphocytes. This is Synaptotagmin-like protein 2 (SYTL2) from Bos taurus (Bovine).